Reading from the N-terminus, the 359-residue chain is Pheromone receptor 1 (359 aa).

The next 7 helical transmembrane spans lie at 5–25 (VTPF…GWHI), 33–53 (ITLS…SVAW), 71–87 (LRHA…LVIA), 110–130 (IIID…LMIV), 147–167 (FLSL…IVSF), 206–226 (LLVL…GSVS), and 268–288 (LILS…MFGL). The disordered stretch occupies residues 335 to 359 (TSGGIDGSPHSEKFSINTPTKYEEA). The span at 348–359 (FSINTPTKYEEA) shows a compositional bias: polar residues.

Belongs to the G-protein coupled receptor 4 family.

It localises to the membrane. In terms of biological role, receptor for the A2 pheromone, a prenylated mating factor. The protein is Pheromone receptor 1 (PRA1) of Ustilago hordei (Barley covered smut fungus).